The chain runs to 156 residues: Inner membrane protein YlaC (156 aa).

The Cytoplasmic segment spans residues M1 to H35. The chain crosses the membrane as a helical span at residues P36–S56. Over E57 to T58 the chain is Periplasmic. A helical membrane pass occupies residues L59 to F79. The Cytoplasmic portion of the chain corresponds to D80–S156.

It is found in the cell inner membrane. In Escherichia coli (strain K12), this protein is Inner membrane protein YlaC (ylaC).